Reading from the N-terminus, the 417-residue chain is Hydroxysteroid dehydrogenase-like protein 2 (417 aa).

Residues 17–23 (GASRGIG), K42, and D74 contribute to the NADP(+) site. Y168 (proton acceptor) is an active-site residue. K172 is a binding site for NADP(+). Residues 306–414 (ASPLQETFKA…KLEKILGQMN (109 aa)) enclose the SCP2 domain.

This sequence belongs to the short-chain dehydrogenases/reductases (SDR) family.

The protein resides in the peroxisome. It localises to the mitochondrion. In terms of biological role, has apparently no steroid dehydrogenase activity. Might act as a metabolic regulator that affects systemic adaptation to nutritional cues. This chain is Hydroxysteroid dehydrogenase-like protein 2 (hsdl2), found in Xenopus laevis (African clawed frog).